The sequence spans 104 residues: Cytochrome c oxidase assembly factor 6 (104 aa).

The segment at 1-22 (MGLFSFDGGKKESQPPNTRSQR) is disordered. A CHCH domain is found at 22–76 (RKLCWESRDAFFQCLDKADILDAMDPKNSKSIKSHCKVENEKFEENCAHSWIKYF). Residues 25 to 35 (CWESRDAFFQC) carry the Cx9C motif motif. 2 disulfide bridges follow: cysteine 25-cysteine 68 and cysteine 35-cysteine 57. A Cx10C motif motif is present at residues 57–68 (CKVENEKFEENC).

It belongs to the cytochrome c oxidase subunit 6B family. Interacts with COX2.

The protein resides in the cytoplasm. The protein localises to the nucleus. Its subcellular location is the mitochondrion intermembrane space. Involved in the maturation of the mitochondrial respiratory chain complex IV subunit MT-CO2/COX2. Thereby, may regulate early steps of complex IV assembly. Mitochondrial respiratory chain complex IV or cytochrome c oxidase is the component of the respiratory chain that catalyzes the transfer of electrons from intermembrane space cytochrome c to molecular oxygen in the matrix and as a consequence contributes to the proton gradient involved in mitochondrial ATP synthesis. May also be required for efficient formation of respiratory supercomplexes comprised of complexes III and IV. In Saccharomyces cerevisiae (strain ATCC 204508 / S288c) (Baker's yeast), this protein is Cytochrome c oxidase assembly factor 6.